We begin with the raw amino-acid sequence, 273 residues long: Nitrogenase iron protein (273 aa).

8–15 (GKGGIGKS) lines the ATP pocket. Residue cysteine 95 participates in [4Fe-4S] cluster binding. At arginine 98 the chain carries ADP-ribosylarginine; by dinitrogenase reductase ADP-ribosyltransferase. Cysteine 130 contributes to the [4Fe-4S] cluster binding site.

Belongs to the NifH/BchL/ChlL family. As to quaternary structure, homodimer. It depends on [4Fe-4S] cluster as a cofactor. In terms of processing, the reversible ADP-ribosylation of Arg-98 inactivates the nitrogenase reductase and regulates nitrogenase activity.

The enzyme catalyses N2 + 8 reduced [2Fe-2S]-[ferredoxin] + 16 ATP + 16 H2O = H2 + 8 oxidized [2Fe-2S]-[ferredoxin] + 2 NH4(+) + 16 ADP + 16 phosphate + 6 H(+). Its function is as follows. The key enzymatic reactions in nitrogen fixation are catalyzed by the nitrogenase complex, which has 2 components: the iron protein and the molybdenum-iron protein. This is Nitrogenase iron protein from Roseiflexus sp. (strain RS-1).